Reading from the N-terminus, the 366-residue chain is MDPQINPAITATANSHDGPIETDAVIVGAGPVGLFQVFELGLLEIKAHIIDSLAYPGGQCIELYPDKPIYDIPAVPVCTGKELTDNLLKQIEPFGATFHLGQEVTLVNKRDDGRFDLETSKGTRFITKTIFIAGGVGSFQPRLLKVDGLDQFDGSQLHYRVRNPSAFAGKNLVIVGGGDSALDWTLNFVQDGPNKAESVILVHRRDGFKAAPASVAKMKELCDAYEMQFIVGQVTGFEATEGQLRSVKVTGGDGVTRVVPLDMLLVFFGLSPKLGPIAEWGLNIERKQVVVDTEKFETNVPGIFAVGDINVYPGKKKLILSGFHEAALAAFGAAPYIFPEKRIHLQYTTTSPKLHKVLGVETPVFD.

Positions 51, 59, 64, 104, 139, 308, and 349 each coordinate FAD.

Belongs to the ferredoxin--NADP reductase type 2 family. In terms of assembly, homodimer. It depends on FAD as a cofactor.

It carries out the reaction 2 reduced [2Fe-2S]-[ferredoxin] + NADP(+) + H(+) = 2 oxidized [2Fe-2S]-[ferredoxin] + NADPH. This is Ferredoxin--NADP reductase from Methylibium petroleiphilum (strain ATCC BAA-1232 / LMG 22953 / PM1).